We begin with the raw amino-acid sequence, 691 residues long: MARDFPLERVRNIGIAAHIDAGKTTTTERILFYSGVVHKIGEVHDGAAVTDWMAQERERGITITAAAISTSWQDHRINIIDTPGHVDFTIEVERSMRVLDGVIAVFCAVGGVQPQSETVWRQADRYSVPRMVFVNKMDRTGADFLKVNNQIKDRLKANALPIQLPIGAEGDLTGIIDLVANKAYLYKNDLGTDIQEAPIPSEMDDEAAEWRYKLMESVAENDEELIETFLETGELSEEQLKKGIREGVLKHGLVPVLCGSAFKNKGVQLVLDAVVDYLPAPVDVKPIQGVLPSGKEDVRPSDDNAPFSALAFKVMSDPYGKLTFVRMYSGVLSKGSYVMNSTKDAKERISRLVILKADEREEVDELRAGDLGAVLGLKNTTTGDTLCNTEDPIVLETLFIPEPVISVAVEPKTKGDMEKLSKALTALSEEDPTFRVSTDPETNQTVIAGMGELHLEILVDRMLREFKVEANIGAPQVSYRETIRSSSKGEGKYARQTGGKGQYGHVIIEMEPAEVGKGFEFVNKIVGGAVPKEYIGPASNGMKETCESGVLAGYPLIDVKVTLVDGSFHDVDSSEMAFKIAGSMAFKDGVKKCNPVLLEPMMKVEVESPDDFLGSVIGDLSSRRGQVEGQSVDDGLSKVQAKVPLAEMFGYATQLRSMTQGRGIFSMEFANYEEVPRNVAEAIITKNQGNS.

The tr-type G domain maps to 8–282 (ERVRNIGIAA…AVVDYLPAPV (275 aa)). GTP is bound by residues 17–24 (AHIDAGKT), 81–85 (DTPGH), and 135–138 (NKMD).

This sequence belongs to the TRAFAC class translation factor GTPase superfamily. Classic translation factor GTPase family. EF-G/EF-2 subfamily.

The protein resides in the cytoplasm. Functionally, catalyzes the GTP-dependent ribosomal translocation step during translation elongation. During this step, the ribosome changes from the pre-translocational (PRE) to the post-translocational (POST) state as the newly formed A-site-bound peptidyl-tRNA and P-site-bound deacylated tRNA move to the P and E sites, respectively. Catalyzes the coordinated movement of the two tRNA molecules, the mRNA and conformational changes in the ribosome. The polypeptide is Elongation factor G (Prochlorococcus marinus (strain MIT 9312)).